A 286-amino-acid polypeptide reads, in one-letter code: ATP synthase gamma chain (286 aa).

This sequence belongs to the ATPase gamma chain family. F-type ATPases have 2 components, CF(1) - the catalytic core - and CF(0) - the membrane proton channel. CF(1) has five subunits: alpha(3), beta(3), gamma(1), delta(1), epsilon(1). CF(0) has three main subunits: a, b and c.

The protein resides in the cell membrane. Its function is as follows. Produces ATP from ADP in the presence of a proton gradient across the membrane. The gamma chain is believed to be important in regulating ATPase activity and the flow of protons through the CF(0) complex. The chain is ATP synthase gamma chain from Ureaplasma urealyticum serovar 10 (strain ATCC 33699 / Western).